Consider the following 595-residue polypeptide: NADH-quinone oxidoreductase subunit C/D (595 aa).

Residues 1–186 (MAETDIAMPE…TPYMQDKAKQ (186 aa)) are NADH dehydrogenase I subunit C. Residues 210 to 595 (DFMFLNLGPN…IDVVMADVDR (386 aa)) are NADH dehydrogenase I subunit D.

The protein in the N-terminal section; belongs to the complex I 30 kDa subunit family. This sequence in the C-terminal section; belongs to the complex I 49 kDa subunit family. As to quaternary structure, NDH-1 is composed of 13 different subunits. Subunits NuoB, CD, E, F, and G constitute the peripheral sector of the complex.

It is found in the cell inner membrane. The enzyme catalyses a quinone + NADH + 5 H(+)(in) = a quinol + NAD(+) + 4 H(+)(out). Functionally, NDH-1 shuttles electrons from NADH, via FMN and iron-sulfur (Fe-S) centers, to quinones in the respiratory chain. The immediate electron acceptor for the enzyme in this species is believed to be ubiquinone. Couples the redox reaction to proton translocation (for every two electrons transferred, four hydrogen ions are translocated across the cytoplasmic membrane), and thus conserves the redox energy in a proton gradient. The sequence is that of NADH-quinone oxidoreductase subunit C/D from Acinetobacter baumannii (strain AYE).